A 307-amino-acid chain; its full sequence is Transcription factor bHLH127 (307 aa).

Disordered stretches follow at residues 41–68 (SDPL…LPHQ) and 101–155 (PHPQ…AEMH). Over residues 110–119 (APPPPKPPSS) the composition is skewed to pro residues. The bHLH domain occupies 150–199 (RAAEMHNLAERRRREKINERMKTLQQLIPRCNKSTKVSMLEDVIEYVKSL).

Belongs to the bHLH protein family. As to quaternary structure, homodimer.

It is found in the nucleus. In Arabidopsis thaliana (Mouse-ear cress), this protein is Transcription factor bHLH127 (BHLH127).